The sequence spans 2240 residues: Death-inducer obliterator 1 (2240 aa).

Met1 bears the N-acetylmethionine mark. Over residues 1–25 (MDDKGDPSNEEAPKAIKPTSKEFRK) the composition is skewed to basic and acidic residues. The disordered stretch occupies residues 1–259 (MDDKGDPSNE…EPGDLGRPKP (259 aa)). Residues Ser60 and Ser114 each carry the phosphoserine modification. Residues 111 to 130 (SEGSVESASETRSGPQSAST) are compositionally biased toward polar residues. Residues 132–146 (VKERPASSEKVKGGD) are compositionally biased toward basic and acidic residues. Residues 147–156 (DHDDTSDSDS) are compositionally biased toward acidic residues. Thr151 is modified (phosphothreonine). Ser152 and Ser154 each carry phosphoserine. 2 consecutive short sequence motifs (nuclear localization signal) follow at residues 165–173 (QNRLRRKRE) and 185–193 (QSRLRKKRR). Basic and acidic residues predominate over residues 172–181 (REQEPTERPL). Positions 230 to 246 (GKDDRESKLEGKAAQDI) are enriched in basic and acidic residues. A Glycyl lysine isopeptide (Lys-Gly) (interchain with G-Cter in SUMO2) cross-link involves residue Lys247. A PHD-type zinc finger spans residues 268–322 (ALYCICRQPHNNRFMICCDRCEEWFHGDCVGISEARGRLLERNGEDYICPNCTIL). Disordered regions lie at residues 431–456 (SGKE…PKCG), 501–567 (STPS…RNLV), 584–618 (KKPP…GPAP), 773–826 (RPAR…EKST), 860–947 (VPSA…EDLS), 1013–1045 (LAKP…PEGD), 1206–1427 (GELD…VAYD), 1453–1472 (RRNS…TPSL), and 1517–2240 (SDAL…ASQA). A compositionally biased stretch (basic and acidic residues) spans 433–451 (KEQKPKPKEKMKMKPEKPS). Residues 501 to 510 (STPSWASDHN) show a composition bias toward polar residues. Ser523 carries the post-translational modification Phosphoserine. Over residues 530–541 (STKEDRRSEEKA) the composition is skewed to basic and acidic residues. Composition is skewed to low complexity over residues 542–551 (AAMAASKKTA) and 604–618 (PSSG…GPAP). Residues 670–790 (IRQNIRRSLK…SRTKLHNESK (121 aa)) form the TFIIS central domain. The segment covering 773–791 (RPARSVMESRTKLHNESKK) has biased composition (basic and acidic residues). The span at 800 to 815 (PDLEDSPPVSDSEEQQ) shows a compositional bias: acidic residues. Phosphoserine is present on residues Ser805 and Ser809. The segment covering 878-890 (VKKEDLKSKHDSS) has biased composition (basic and acidic residues). Lys879 is covalently cross-linked (Glycyl lysine isopeptide (Lys-Gly) (interchain with G-Cter in SUMO2)). A phosphoserine mark is found at Ser889 and Ser898. Residues 930-941 (PGPPGDGHPEPS) are compositionally biased toward pro residues. Residues Ser1019, Ser1030, and Ser1040 each carry the phosphoserine modification. The segment covering 1207-1220 (ELDKMDEKRTRLQP) has biased composition (basic and acidic residues). Tyr1244 carries the phosphotyrosine modification. Position 1256 is a phosphothreonine (Thr1256). Over residues 1258–1271 (PGSPPPPPPLPEPP) the composition is skewed to pro residues. Ser1260 and Ser1312 each carry phosphoserine. Over residues 1276–1313 (LSSLKPAAPSPATAATTAAAASTAASSTASSASKTASP) the composition is skewed to low complexity. The span at 1376–1392 (LEEEEDDRPYDPEEEYD) shows a compositional bias: acidic residues. Over residues 1393 to 1424 (PERAFDTQLVERGRRHEVERAPEAAAAEREEV) the composition is skewed to basic and acidic residues. Ser1456 carries the phosphoserine modification. The residue at position 1469 (Thr1469) is a Phosphothreonine. Residues Ser1522 and Ser1714 each carry the phosphoserine modification. Over residues 1771–1782 (FPGPRGPAPPFP) the composition is skewed to pro residues. Arg1835 is modified (omega-N-methylarginine). Over residues 1842-1856 (FEERKDPHGEKREFQ) the composition is skewed to basic and acidic residues. Asymmetric dimethylarginine is present on residues Arg1893, Arg1894, Arg1977, Arg1982, Arg1993, Arg2008, and Arg2024. Over residues 2044-2059 (AGPPSALSSSAPGQGP) the composition is skewed to low complexity. Composition is skewed to basic and acidic residues over residues 2069-2101 (DFRE…KPLE) and 2109-2230 (ASED…EASR).

As to quaternary structure, interacts specifically (via PHD-type zinc finger) with histone H3 that is trimethylated at 'Lys-4' (H3K4me3), histone phosphorylation at 'Thr-3' or 'Thr-6' disrupts this binding and promotes translocation of DIDO1 from chromatin to the mitotic spindle during mitosis. As to expression, ubiquitous.

Its subcellular location is the cytoplasm. The protein resides in the nucleus. It is found in the cytoskeleton. It localises to the spindle. Putative transcription factor, weakly pro-apoptotic when overexpressed. Tumor suppressor. Required for early embryonic stem cell development. Its function is as follows. Displaces isoform 4 at the onset of differentiation, required for repression of stemness genes. This is Death-inducer obliterator 1 (DIDO1) from Homo sapiens (Human).